The following is an 89-amino-acid chain: Small ribosomal subunit protein uS14A (89 aa).

The protein belongs to the universal ribosomal protein uS14 family. Part of the 30S ribosomal subunit. Contacts proteins S3 and S10.

In terms of biological role, binds 16S rRNA, required for the assembly of 30S particles and may also be responsible for determining the conformation of the 16S rRNA at the A site. This chain is Small ribosomal subunit protein uS14A, found in Listeria welshimeri serovar 6b (strain ATCC 35897 / DSM 20650 / CCUG 15529 / CIP 8149 / NCTC 11857 / SLCC 5334 / V8).